Reading from the N-terminus, the 77-residue chain is uncharacterized protein (77 aa).

The Peptidase A1 domain maps to 1-77 (MAFERQGKIE…VAILDGKLVW (77 aa)).

This is an uncharacterized protein from Saccharomyces cerevisiae (strain ATCC 204508 / S288c) (Baker's yeast).